The chain runs to 270 residues: MTQKKENRITARLREDRKLLLAYYMPEFPVAGSTLPVLEALQDGGADIIELGIPFSDPVGDGPVIQNAAHIAIRNGVSVRSLLELVRKARAGEGCRKITVPILLMGYSNPLIAYGGDCFLHDAVKAGVDGLLIPDLPPEESADFLQRAKSLGLTVVYLISPVTPPERIEWIDSLSTDFSYCLAVNATTGTAKLADASTEASVDRYLERVRLHARKKFVVGFGIRDRARVEHMWRLADGAVVGTALLEHIAGAPNPGEAARRAGEFWRGLR.

Active-site proton acceptor residues include Glu-50 and Asp-61.

Belongs to the TrpA family. As to quaternary structure, tetramer of two alpha and two beta chains.

The catalysed reaction is (1S,2R)-1-C-(indol-3-yl)glycerol 3-phosphate + L-serine = D-glyceraldehyde 3-phosphate + L-tryptophan + H2O. The protein operates within amino-acid biosynthesis; L-tryptophan biosynthesis; L-tryptophan from chorismate: step 5/5. Functionally, the alpha subunit is responsible for the aldol cleavage of indoleglycerol phosphate to indole and glyceraldehyde 3-phosphate. In Chlorobium luteolum (strain DSM 273 / BCRC 81028 / 2530) (Pelodictyon luteolum), this protein is Tryptophan synthase alpha chain.